The chain runs to 226 residues: PKHD-type hydroxylase TERTU_2553 (226 aa).

One can recognise a Fe2OG dioxygenase domain in the interval 78-177; that stretch reads KIYPPKFNCY…RVASFIWIQS (100 aa). Positions 96, 98, and 158 each coordinate Fe cation. Arginine 168 is a 2-oxoglutarate binding site.

It depends on Fe(2+) as a cofactor. Requires L-ascorbate as cofactor.

This is PKHD-type hydroxylase TERTU_2553 from Teredinibacter turnerae (strain ATCC 39867 / T7901).